A 711-amino-acid polypeptide reads, in one-letter code: Double-stranded RNA-specific editase 1 (711 aa).

Positions 1-78 (MDIEDEENMS…KRRKTPGPVL (78 aa)) are disordered. A compositionally biased stretch (basic residues) spans 63–73 (SKYRLKKRRKT). Positions 78-144 (LPKNALMQLN…AEKALRSFVQ (67 aa)) constitute a DRBM 1 domain. Interaction with substrate RNA regions lie at residues 83-88 (LMQLNE) and 104-105 (VH). Position 149 is a phosphoserine (S149). Residues 176 to 220 (LFNGFETPDKSEPPFYVGSNGDDSFSSSGDVSLSASPVPASLTQP) are disordered. Over residues 192 to 213 (VGSNGDDSFSSSGDVSLSASPV) the composition is skewed to low complexity. The region spanning 231 to 298 (PSGKNPVMIL…AQSALATVFN (68 aa)) is the DRBM 2 domain. Interaction with substrate RNA regions lie at residues 237–242 (VMILNE) and H259. Positions 370–707 (SVSTGTKCIN…VEKPTEQDQF (338 aa)) constitute an A to I editase domain. Residue H394 coordinates Zn(2+). Catalysis depends on E396, which acts as the Proton donor. Residues R400 and R401 each coordinate 1D-myo-inositol hexakisphosphate. Residues C451 and C526 each coordinate Zn(2+). Residues K529, R532, K639, K672, K682, and K700 each contribute to the 1D-myo-inositol hexakisphosphate site.

In terms of assembly, homodimer. Homodimerization is essential for its catalytic activity. Can form heterodimers with isoform 5 of ADAR/ADAR1. 1D-myo-inositol hexakisphosphate serves as cofactor.

Its subcellular location is the nucleus. The protein resides in the nucleolus. It carries out the reaction adenosine in double-stranded RNA + H2O + H(+) = inosine in double-stranded RNA + NH4(+). In terms of biological role, catalyzes the hydrolytic deamination of adenosine to inosine in double-stranded RNA (dsRNA) referred to as A-to-I RNA editing. This may affect gene expression and function in a number of ways that include mRNA translation by changing codons and hence the amino acid sequence of proteins; pre-mRNA splicing by altering splice site recognition sequences; RNA stability by changing sequences involved in nuclease recognition; genetic stability in the case of RNA virus genomes by changing sequences during viral RNA replication; and RNA structure-dependent activities such as microRNA production or targeting or protein-RNA interactions. Can edit both viral and cellular RNAs and can edit RNAs at multiple sites (hyper-editing) or at specific sites (site-specific editing). Its cellular RNA substrates include: bladder cancer-associated protein (BLCAP), neurotransmitter receptors for glutamate (GRIA2 and GRIK2) and serotonin (HTR2C), GABA receptor (GABRA3) and potassium voltage-gated channel (KCNA1). Site-specific RNA editing of transcripts encoding these proteins results in amino acid substitutions which consequently alter their functional activities. Edits GRIA2 at both the Q/R and R/G sites efficiently but converts the adenosine in hotspot1 much less efficiently. Can inhibit cell proliferation and migration and can stimulate exocytosis. In Mus musculus (Mouse), this protein is Double-stranded RNA-specific editase 1 (Adarb1).